Here is a 155-residue protein sequence, read N- to C-terminus: MKIMVIQGPNLNMLGMREPNIYGRMKLEDIHKQMQSVADQAGTEIEFFQSNFEGEIVDKIQECVGTADGIIINPAAYTHTSIAIHDAILAVSLPTIEVHISNPARREDYRKTSLIAPVTAGQIIGFGPIGYHLAMMGMLQIFEQIKAIKTANKGE.

Tyrosine 22 functions as the Proton acceptor in the catalytic mechanism. Substrate is bound by residues asparagine 73, histidine 79, and aspartate 86. The Proton donor role is filled by histidine 99. Residues isoleucine 100 to serine 101 and arginine 110 each bind substrate.

It belongs to the type-II 3-dehydroquinase family. In terms of assembly, homododecamer.

The catalysed reaction is 3-dehydroquinate = 3-dehydroshikimate + H2O. The protein operates within metabolic intermediate biosynthesis; chorismate biosynthesis; chorismate from D-erythrose 4-phosphate and phosphoenolpyruvate: step 3/7. Catalyzes a trans-dehydration via an enolate intermediate. The polypeptide is 3-dehydroquinate dehydratase (Campylobacter hominis (strain ATCC BAA-381 / DSM 21671 / CCUG 45161 / LMG 19568 / NCTC 13146 / CH001A)).